Consider the following 403-residue polypeptide: Phosphoglycerate kinase (403 aa).

Substrate is bound by residues 21-23 (DFN), Arg36, 59-62 (HLGR), Arg119, and Arg154. ATP-binding positions include Lys207, Gly299, Glu330, and 357-360 (GGDA).

This sequence belongs to the phosphoglycerate kinase family. Monomer.

The protein localises to the cytoplasm. The catalysed reaction is (2R)-3-phosphoglycerate + ATP = (2R)-3-phospho-glyceroyl phosphate + ADP. Its pathway is carbohydrate degradation; glycolysis; pyruvate from D-glyceraldehyde 3-phosphate: step 2/5. This chain is Phosphoglycerate kinase, found in Chlamydia trachomatis serovar L2 (strain ATCC VR-902B / DSM 19102 / 434/Bu).